The chain runs to 888 residues: Rab GTPase-activating protein eat-17 (888 aa).

The span at arginine 41–proline 60 shows a compositional bias: low complexity. 2 disordered regions span residues arginine 41–glycine 87 and leucine 104–glutamate 135. A compositionally biased stretch (polar residues) spans serine 114–serine 123. Basic and acidic residues predominate over residues glutamate 124–serine 133. One can recognise a Rab-GAP TBC domain in the interval glycine 173–glycine 357. Residues alanine 631–serine 654 form a disordered region. Residues glutamate 694 to asparagine 770 are a coiled coil. Residues leucine 854–histidine 888 are disordered. Positions glycine 874–histidine 888 are enriched in polar residues.

As to quaternary structure, may interact with rab-6.2 (in GTP-bound form). In terms of tissue distribution, highly expressed in the terminal bulb muscles, pharyngeal muscle, in intestine and vulva.

Rab GTPase activating protein for the small GTPase rab-6.2. Required for grinder formation, which is the feeding organ that breaks down food. The sequence is that of Rab GTPase-activating protein eat-17 from Caenorhabditis elegans.